Reading from the N-terminus, the 528-residue chain is Aurora kinase (528 aa).

2 disordered regions span residues 1 to 35 and 48 to 235; these read MMLP…SLFQ and ISKP…KPQQ. Composition is skewed to low complexity over residues 18-29 and 59-94; these read NNNNSNNNNNNN and HSHT…PNLN. Polar residues predominate over residues 95–104; it reads TSLVFTPTKN. A compositionally biased stretch (low complexity) spans 105–120; sequence SSSSSSSHSSSLLSSS. A compositionally biased stretch (polar residues) spans 129–155; that stretch reads QPESNHTRATSHYRTTSTSQYKSSANK. Over residues 185 to 230 the composition is skewed to low complexity; the sequence is TTTATQNTNNNKILNPSLSSSTIRFSTVSSSTSSSTTSSSSSSHTS. The 274-residue stretch at 242 to 515 folds into the Protein kinase domain; sequence FEFGKILGKG…LKEVLNHNWI (274 aa). ATP contacts are provided by residues 248–256 and K271; that span reads LGKGKLGRV. D365 acts as the Proton acceptor in catalysis.

The protein belongs to the protein kinase superfamily. Ser/Thr protein kinase family. Aurora subfamily.

It is found in the nucleus. Its subcellular location is the cytoplasm. It localises to the cytoskeleton. The protein resides in the spindle. The protein localises to the chromosome. It is found in the centromere. Its subcellular location is the kinetochore. It catalyses the reaction L-seryl-[protein] + ATP = O-phospho-L-seryl-[protein] + ADP + H(+). It carries out the reaction L-threonyl-[protein] + ATP = O-phospho-L-threonyl-[protein] + ADP + H(+). In terms of biological role, component of the chromosomal passenger complex (CPC), a complex that acts as a key regulator of chromosome segregation and cytokinesis. Has a role in error-correction of aberrent kinetochore-microtubule attachments to ensure that sister kinetochores become bioriented and connect to opposite poles by promoting spindle assembly checkpoint signaling. This Candida albicans (strain SC5314 / ATCC MYA-2876) (Yeast) protein is Aurora kinase (IPL1).